The primary structure comprises 316 residues: Probable porphobilinogen deaminase (316 aa).

Cys-234 is modified (S-(dipyrrolylmethanemethyl)cysteine).

The protein belongs to the HMBS family. The cofactor is dipyrromethane.

It catalyses the reaction 4 porphobilinogen + H2O = hydroxymethylbilane + 4 NH4(+). Its pathway is porphyrin-containing compound metabolism; protoporphyrin-IX biosynthesis; coproporphyrinogen-III from 5-aminolevulinate: step 2/4. In terms of biological role, tetrapolymerization of the monopyrrole PBG into the hydroxymethylbilane pre-uroporphyrinogen in several discrete steps. The protein is Probable porphobilinogen deaminase of Methanosarcina mazei (strain ATCC BAA-159 / DSM 3647 / Goe1 / Go1 / JCM 11833 / OCM 88) (Methanosarcina frisia).